Consider the following 298-residue polypeptide: Ethanolamine ammonia-lyase small subunit (298 aa).

Residues Val-210, Glu-231, and Cys-261 each coordinate adenosylcob(III)alamin.

Belongs to the EutC family. As to quaternary structure, the basic unit is a heterodimer which dimerizes to form tetramers. The heterotetramers trimerize; 6 large subunits form a core ring with 6 small subunits projecting outwards. Adenosylcob(III)alamin serves as cofactor.

It is found in the bacterial microcompartment. The enzyme catalyses ethanolamine = acetaldehyde + NH4(+). The protein operates within amine and polyamine degradation; ethanolamine degradation. In terms of biological role, catalyzes the deamination of various vicinal amino-alcohols to oxo compounds. Allows this organism to utilize ethanolamine as the sole source of nitrogen and carbon in the presence of external vitamin B12. This Salmonella schwarzengrund (strain CVM19633) protein is Ethanolamine ammonia-lyase small subunit.